The chain runs to 110 residues: Large ribosomal subunit protein P2B (110 aa).

S29 is subject to Phosphoserine. K49 participates in a covalent cross-link: Glycyl lysine isopeptide (Lys-Gly) (interchain with G-Cter in ubiquitin). The interval 66–110 (VPTGGASSAAAGAAGAAAGGDAAEEEKEEEAKEESDDDMGFGLFD) is disordered. Residues 69 to 86 (GGASSAAAGAAGAAAGGD) show a composition bias toward low complexity. Acidic residues predominate over residues 87 to 104 (AAEEEKEEEAKEESDDDM). S100 carries the post-translational modification Phosphoserine.

The protein belongs to the eukaryotic ribosomal protein P1/P2 family. As to quaternary structure, component of the large ribosomal subunit (LSU). Mature yeast ribosomes consist of a small (40S) and a large (60S) subunit. The 40S small subunit contains 1 molecule of ribosomal RNA (18S rRNA) and 33 different proteins (encoded by 57 genes). The large 60S subunit contains 3 rRNA molecules (25S, 5.8S and 5S rRNA) and 46 different proteins (encoded by 81 genes). The 5 acidic ribosomal P-proteins form the stalk structure of the 60S subunit. They are organized as a pentameric complex in which uL10/P0 interacts with 2 heterodimers, P1A-P2B and P1B-P2A. Post-translationally, the N-terminus is not modified.

It is found in the cytoplasm. Its function is as follows. Component of the ribosome, a large ribonucleoprotein complex responsible for the synthesis of proteins in the cell. The small ribosomal subunit (SSU) binds messenger RNAs (mRNAs) and translates the encoded message by selecting cognate aminoacyl-transfer RNA (tRNA) molecules. The large subunit (LSU) contains the ribosomal catalytic site termed the peptidyl transferase center (PTC), which catalyzes the formation of peptide bonds, thereby polymerizing the amino acids delivered by tRNAs into a polypeptide chain. The nascent polypeptides leave the ribosome through a tunnel in the LSU and interact with protein factors that function in enzymatic processing, targeting, and the membrane insertion of nascent chains at the exit of the ribosomal tunnel. The sequence is that of Large ribosomal subunit protein P2B from Saccharomyces cerevisiae (strain ATCC 204508 / S288c) (Baker's yeast).